The primary structure comprises 580 residues: M-phase inducer phosphatase 2 (580 aa).

Positions 1-24 (MEVPQPEPAPGSALSPAGVCGGAQ) are disordered. Phosphoserine is present on S42. The span at 89–107 (SLSRRASESSLSSESSESS) shows a compositional bias: low complexity. 2 disordered regions span residues 89–117 (SLSRRASESSLSSESSESSDAGLCMDSPS) and 165–196 (NITNSQAPDGRRKSEAGSGAASSSGEDKENDG). Position 169 is a phosphoserine; by MELK (S169). Position 249 is a phosphoserine (S249). Residue S323 is modified to Phosphoserine; by MELK and MAPK14. The interval 331–370 (PILKRLERPQDRDTPVQNKRRRSVTPPEEQQEAEEPKARV) is disordered. The segment covering 334 to 344 (KRLERPQDRDT) has biased composition (basic and acidic residues). The residue at position 353 (S353) is a Phosphoserine; by AURKA. Phosphoserine; by BRSK1 and MAPK14 is present on S375. The Rhodanese domain maps to 431–538 (IVDKFVIVDC…FFPQHPNFCE (108 aa)). Phosphoserine is present on S470. The active site involves C487. Residue S563 is modified to Phosphoserine.

Belongs to the MPI phosphatase family. Interacts with MAPK14 and 14-3-3 proteins. In terms of processing, phosphorylated by BRSK1 in vitro. Phosphorylated by CHEK1, which inhibits the activity of this protein. Phosphorylation at Ser-353 by AURKA might locally participate in the control of the onset of mitosis. Phosphorylation by MELK at Ser-169 promotes localization to the centrosome and the spindle poles during mitosis. Phosphorylation at Ser-323 and Ser-375 by MAPK14 is required for binding to 14-3-3 proteins.

It localises to the cytoplasm. The protein localises to the cytoskeleton. It is found in the microtubule organizing center. Its subcellular location is the centrosome. The protein resides in the spindle pole. The enzyme catalyses O-phospho-L-tyrosyl-[protein] + H2O = L-tyrosyl-[protein] + phosphate. With respect to regulation, stimulated by B-type cyclins. In terms of biological role, tyrosine protein phosphatase which functions as a dosage-dependent inducer of mitotic progression. Directly dephosphorylates CDK1 and stimulates its kinase activity. Required for G2/M phases of the cell cycle progression and abscission during cytokinesis in a ECT2-dependent manner. The three isoforms seem to have a different level of activity. The sequence is that of M-phase inducer phosphatase 2 (CDC25B) from Homo sapiens (Human).